Here is a 422-residue protein sequence, read N- to C-terminus: DNA-directed RNA polymerase III subunit RPC4 (422 aa).

Disordered regions lie at residues 1–80 (MSSN…GQQR), 115–190 (KSEG…DDEE), 219–244 (IQEA…GTGL), and 318–350 (RPAV…TKDA). The Nuclear localization signal signature appears at 25–29 (KPSLK). The span at 28–37 (LKFKPKAVAR) shows a compositional bias: basic residues. Positions 38–64 (KSKEEREAAASKVKLEEESKRGNDKKH) are enriched in basic and acidic residues. A phosphoserine mark is found at S137 and S138. Residues 138–148 (SENEAEDDDNE) show a composition bias toward acidic residues. The span at 160 to 170 (MGKEFEARNLI) shows a compositional bias: basic and acidic residues. S178, S182, and S224 each carry phosphoserine. Over residues 219–229 (IQEALSEKPTR) the composition is skewed to basic and acidic residues. T228 and T232 each carry phosphothreonine.

The protein belongs to the eukaryotic RPC4/POLR3D RNA polymerase subunit family. In terms of assembly, component of the RNA polymerase III (Pol III) complex consisting of 17 subunits. Interacts with RPC37/RPC5. RPC53/RPC4, RPC37/RPC5 and RPC11/RPC10 probably form a Pol III subcomplex.

The protein resides in the nucleus. In terms of biological role, DNA-dependent RNA polymerase catalyzes the transcription of DNA into RNA using the four ribonucleoside triphosphates as substrates. Specific peripheric component of RNA polymerase III which synthesizes small RNAs, such as 5S rRNA and tRNAs. Essential for tRNA synthesis. The RPC53/RPC4-RPC37/RPC5 subcomplex is required for terminator recognition and reinitiation. In Saccharomyces cerevisiae (strain ATCC 204508 / S288c) (Baker's yeast), this protein is DNA-directed RNA polymerase III subunit RPC4 (RPC53).